The chain runs to 155 residues: MDCNRMVIMNSVNEETYYFGQRKLAWFAGSMKKDYIEAGSWDDKAKAVPYSVYREFALNPAPIGKTLGISEKGDPIWVDIPPKTKHQLITEAEDKKSGLMQGAREVISPLQDAIDLEMATQEETQKLTAWKRYRVLLNRLDTSNAPDIDWPKKPE.

It belongs to the tfa family.

Functionally, chaperone involved in tail fiber assembly. The protein is Probable tail fiber assembly protein (37) of Escherichia coli (Bacteriophage APSE-1).